Here is a 421-residue protein sequence, read N- to C-terminus: Polymerase delta-interacting protein 3 (421 aa).

The residue at position 2 (Ala-2) is an N-acetylalanine. Phosphoserine is present on Ser-5. Arg-33 carries the post-translational modification Omega-N-methylarginine. Residues Ser-44 and Ser-127 each carry the phosphoserine modification. A Phosphothreonine modification is found at Thr-140. Lys-200 participates in a covalent cross-link: Glycyl lysine isopeptide (Lys-Gly) (interchain with G-Cter in SUMO2). Phosphoserine is present on residues Ser-204, Ser-215, and Ser-217. Lys-223 participates in a covalent cross-link: Glycyl lysine isopeptide (Lys-Gly) (interchain with G-Cter in SUMO2). The residue at position 244 (Ser-244) is a Phosphoserine. Residue Lys-248 forms a Glycyl lysine isopeptide (Lys-Gly) (interchain with G-Cter in SUMO2) linkage. Ser-275 is modified (phosphoserine). Residues 280–351 (TKMTVNNLHP…QPMKCNLHMN (72 aa)) form the RRM domain. A compositionally biased stretch (basic and acidic residues) spans 370 to 379 (SMKKESELPR). Positions 370 to 393 (SMKKESELPRRVNSASSSNPPAEV) are disordered. A Glycyl lysine isopeptide (Lys-Gly) (interchain with G-Cter in SUMO2) cross-link involves residue Lys-372. 2 positions are modified to phosphoserine; by RPS6KB1: Ser-383 and Ser-385. A Glycyl lysine isopeptide (Lys-Gly) (interchain with G-Cter in SUMO2) cross-link involves residue Lys-418.

In terms of assembly, interacts with POLD2. Interacts with NCBP1 and EIF4A3. Associates with the multiprotein exon junction complex (EJC). Interacts with RPS6KB1 (activated). Interacts with ERH. Interacts with THOC2, DDX39B and ZC3H11A; the interactions are ATP-dependent and indicative for an association with the TREX complex. In terms of processing, phosphorylated at Ser-383 and Ser-385 by RPS6KB1.

It is found in the nucleus. It localises to the nucleus speckle. The protein localises to the cytoplasm. In terms of biological role, is involved in regulation of translation. Is preferentially associated with CBC-bound spliced mRNA-protein complexes during the pioneer round of mRNA translation. Contributes to enhanced translational efficiency of spliced over nonspliced mRNAs. Recruits activated ribosomal protein S6 kinase beta-1 I/RPS6KB1 to newly synthesized mRNA. Involved in nuclear mRNA export; probably mediated by association with the TREX complex. This Homo sapiens (Human) protein is Polymerase delta-interacting protein 3 (POLDIP3).